Reading from the N-terminus, the 125-residue chain is NADH dehydrogenase [ubiquinone] 1 beta subcomplex subunit 8, mitochondrial (125 aa).

The N-terminal 29 residues, 1-29, are a transit peptide targeting the mitochondrion; that stretch reads MAGRLSGVASRIMGGNGVVARSVGSSLRQ. A helical transmembrane segment spans residues 78 to 98; sequence ALAWLSGGLGFFVGLGLLAVL.

Belongs to the complex I NDUFB8 subunit family. As to quaternary structure, complex I is composed of at least 49 different subunits.

Its subcellular location is the mitochondrion inner membrane. Its function is as follows. Accessory subunit of the mitochondrial membrane respiratory chain NADH dehydrogenase (Complex I), that is believed not to be involved in catalysis. Complex I functions in the transfer of electrons from NADH to the respiratory chain. The immediate electron acceptor for the enzyme is believed to be ubiquinone. The polypeptide is NADH dehydrogenase [ubiquinone] 1 beta subcomplex subunit 8, mitochondrial (Arabidopsis thaliana (Mouse-ear cress)).